Consider the following 147-residue polypeptide: Large ribosomal subunit protein uL15 (147 aa).

A disordered region spans residues 1–46 (MSIRLENLSYTPGARKEKHRKGRGHAAGKGKQAGRGQSGQKKRSTV). Residues 16–28 (KEKHRKGRGHAAG) are compositionally biased toward basic residues.

This sequence belongs to the universal ribosomal protein uL15 family. As to quaternary structure, part of the 50S ribosomal subunit.

Functionally, binds to the 23S rRNA. This chain is Large ribosomal subunit protein uL15, found in Mesomycoplasma hyopneumoniae (strain 232) (Mycoplasma hyopneumoniae).